The sequence spans 151 residues: MSKVTKKVEELVKPILEKYGFDLVDIEFKKEGKKHFLRVYIDKPGGITIDDCQLVSEELSNKLDIVDPIPFSYYLEVSSPGVDRPLVNDRDFIRNKGRVVDVFLKQPIMNTTKLTGELVEKNEDVLIIMIDGENISIPFENVKKVKVAIRF.

Belongs to the RimP family.

The protein localises to the cytoplasm. In terms of biological role, required for maturation of 30S ribosomal subunits. The chain is Ribosome maturation factor RimP from Caldicellulosiruptor saccharolyticus (strain ATCC 43494 / DSM 8903 / Tp8T 6331).